The following is a 66-amino-acid chain: uncharacterized protein (66 aa).

This is an uncharacterized protein from Schizosaccharomyces pombe (strain 972 / ATCC 24843) (Fission yeast).